The chain runs to 811 residues: Probable inorganic carbon transporter subunit DabA (811 aa).

Cys-336, Asp-338, His-498, and Cys-513 together coordinate Zn(2+).

This sequence belongs to the inorganic carbon transporter (TC 9.A.2) DabA family. As to quaternary structure, forms a complex with DabB. It depends on Zn(2+) as a cofactor.

The protein resides in the cell inner membrane. Functionally, part of an energy-coupled inorganic carbon pump. The polypeptide is Probable inorganic carbon transporter subunit DabA (Azorhizobium caulinodans (strain ATCC 43989 / DSM 5975 / JCM 20966 / LMG 6465 / NBRC 14845 / NCIMB 13405 / ORS 571)).